Reading from the N-terminus, the 862-residue chain is Protein translocase subunit SecA (862 aa).

ATP contacts are provided by residues Q88, 106 to 110 (GEGKT), and D506. Residues C839, C841, C850, and H851 each contribute to the Zn(2+) site.

This sequence belongs to the SecA family. In terms of assembly, monomer and homodimer. Part of the essential Sec protein translocation apparatus which comprises SecA, SecYEG and auxiliary proteins SecDF-YajC and YidC. Zn(2+) serves as cofactor.

The protein resides in the cell inner membrane. The protein localises to the cytoplasm. The catalysed reaction is ATP + H2O + cellular proteinSide 1 = ADP + phosphate + cellular proteinSide 2.. In terms of biological role, part of the Sec protein translocase complex. Interacts with the SecYEG preprotein conducting channel. Has a central role in coupling the hydrolysis of ATP to the transfer of proteins into and across the cell membrane, serving as an ATP-driven molecular motor driving the stepwise translocation of polypeptide chains across the membrane. This is Protein translocase subunit SecA from Campylobacter jejuni subsp. doylei (strain ATCC BAA-1458 / RM4099 / 269.97).